A 283-amino-acid polypeptide reads, in one-letter code: Small ribosomal subunit protein uS2B (283 aa).

The segment at 254-283 is disordered; the sequence is GQVGQSAWDEEGDWNTTGAAQTSDWANTVA. Residues 267 to 283 are compositionally biased toward polar residues; it reads WNTTGAAQTSDWANTVA.

The protein belongs to the universal ribosomal protein uS2 family. As to quaternary structure, component of the small ribosomal subunit. Mature ribosomes consist of a small (40S) and a large (60S) subunit. The 40S subunit contains about 33 different proteins and 1 molecule of RNA (18S). The 60S subunit contains about 49 different proteins and 3 molecules of RNA (25S, 5.8S and 5S). Interacts with rps21.

Its subcellular location is the cytoplasm. Required for the assembly and/or stability of the 40S ribosomal subunit. Required for the processing of the 20S rRNA-precursor to mature 18S rRNA in a late step of the maturation of 40S ribosomal subunits. This is Small ribosomal subunit protein uS2B (rps0b) from Schizosaccharomyces japonicus (strain yFS275 / FY16936) (Fission yeast).